Reading from the N-terminus, the 372-residue chain is MRINMLFIVAFSFLVSVRSLPMRPTLKYESIFNFGDSLSDTGNFLLSGDVDSPNIGRLPYGQTFFNRSTGRCSDGRLIIDFIAEASGLPYIPPYLQSLRTNDSVDFKRGANFAVAGATANEFSFFKNRGLSVTLLTNKTLDIQLDWFKKLKPSLCKTKPECEQYFRKSLFLVGEIGGNDYNYPLLAFRSFKHAMDLVPFVINKIMDVTSALIEEGAMTLIVPGNLPIGCSAALLERFNDNSGWLYDSRNQCYMPLNNLAKLHNDKLKKGLAALRKKYPYAKIIYADYYSSAMQFFNSPSKYGFTGSVLKACCGGGDGRYNVQPNVRCGEKGSTTCEDPSTYANWDGIHLTEAAYRHIATGLISGRFTMPTYN.

A signal peptide spans 1 to 19 (MRINMLFIVAFSFLVSVRS). Residue Ser37 is the Nucleophile of the active site. 3 N-linked (GlcNAc...) asparagine glycosylation sites follow: Asn66, Asn101, and Asn137. Catalysis depends on residues Asp345 and His348.

The protein belongs to the 'GDSL' lipolytic enzyme family.

It is found in the secreted. The chain is GDSL esterase/lipase At5g45910 from Arabidopsis thaliana (Mouse-ear cress).